Here is a 21-residue protein sequence, read N- to C-terminus: Peptide PGLa-R5 (21 aa).

Leucine amide is present on L21.

In terms of tissue distribution, expressed by the skin glands.

The protein localises to the secreted. Functionally, antimicrobial peptide. This Xenopus ruwenzoriensis (Uganda clawed frog) protein is Peptide PGLa-R5.